Here is a 480-residue protein sequence, read N- to C-terminus: Ribosomal protein uS12 methylthiotransferase RimO (480 aa).

The 122-residue stretch at 14–135 folds into the MTTase N-terminal domain; that stretch reads LSVAMVTLGC…IAARLRSIVA (122 aa). 6 residues coordinate [4Fe-4S] cluster: C23, C59, C98, C193, C197, and C200. The Radical SAM core domain occupies 179 to 410; that stretch reads LDDGPTAALK…DLVEELTSQR (232 aa). The region spanning 412 to 480 is the TRAM domain; the sequence is AERLGEQVEV…EGADLDARPL (69 aa).

The protein belongs to the methylthiotransferase family. RimO subfamily. It depends on [4Fe-4S] cluster as a cofactor.

It localises to the cytoplasm. It catalyses the reaction L-aspartate(89)-[ribosomal protein uS12]-hydrogen + (sulfur carrier)-SH + AH2 + 2 S-adenosyl-L-methionine = 3-methylsulfanyl-L-aspartate(89)-[ribosomal protein uS12]-hydrogen + (sulfur carrier)-H + 5'-deoxyadenosine + L-methionine + A + S-adenosyl-L-homocysteine + 2 H(+). Its function is as follows. Catalyzes the methylthiolation of an aspartic acid residue of ribosomal protein uS12. In Nocardioides sp. (strain ATCC BAA-499 / JS614), this protein is Ribosomal protein uS12 methylthiotransferase RimO.